The primary structure comprises 141 residues: Protein X (141 aa).

Positions 24–48 (QSSGPSFPRPAAGSAASSASSPSPS) are enriched in low complexity. A disordered region spans residues 24-52 (QSSGPSFPRPAAGSAASSASSPSPSDESD). The tract at residues 68-113 (PCCLVFTCAELRTMDSTVNFVSWHANRQLGMPSKDLWTPYIKDQLL) is mitochondrial targeting sequence.

Belongs to the orthohepadnavirus protein X family. May form homodimer. May interact with host CEBPA, CFLAR, CREB1, DDB1, E4F1, HBXIP, HSPD1/HSP60, NFKBIA, POLR2E and SMAD4. Interacts with host SMC5-SMC6 complex and induces its degradation. Interacts with host TRPC4AP; leading to prevent ubiquitination of TRPC4AP. Interacts with host PLSCR1; this interaction promotes ubiquitination and degradation of HBx and impairs HBx-mediated cell proliferation. Post-translationally, a fraction may be phosphorylated in insect cells and HepG2 cells, a human hepatoblastoma cell line. Phosphorylated in vitro by host protein kinase C or mitogen-activated protein kinase. N-acetylated in insect cells.

Its subcellular location is the host cytoplasm. The protein resides in the host nucleus. It localises to the host mitochondrion. In terms of biological role, multifunctional protein that plays a role in silencing host antiviral defenses and promoting viral transcription. Does not seem to be essential for HBV infection. May be directly involved in development of cirrhosis and liver cancer (hepatocellular carcinoma). Most of cytosolic activities involve modulation of cytosolic calcium. The effect on apoptosis is controversial depending on the cell types in which the studies have been conducted. May induce apoptosis by localizing in mitochondria and causing loss of mitochondrial membrane potential. May also modulate apoptosis by binding host CFLAR, a key regulator of the death-inducing signaling complex (DISC). Promotes viral transcription by using the host E3 ubiquitin ligase DDB1 to target the SMC5-SMC6 complex to proteasomal degradation. This host complex would otherwise bind to viral episomal DNA, and prevents its transcription. Moderately stimulates transcription of many different viral and cellular transcription elements. Promoters and enhancers stimulated by HBx contain DNA binding sites for NF-kappa-B, AP-1, AP-2, c-EBP, ATF/CREB, or the calcium-activated factor NF-AT. This is Protein X from Woodchuck hepatitis B virus (isolate 7) (WHV).